The primary structure comprises 1108 residues: Isoleucine--tRNA ligase (1108 aa).

A 'HIGH' region motif is present at residues 53–63 (PFANGLPHYGH). Residues 654 to 658 (KLSKR) carry the 'KMSKS' region motif. ATP is bound at residue lysine 657.

This sequence belongs to the class-I aminoacyl-tRNA synthetase family. IleS type 2 subfamily. In terms of assembly, monomer. It depends on Zn(2+) as a cofactor.

It localises to the cytoplasm. The enzyme catalyses tRNA(Ile) + L-isoleucine + ATP = L-isoleucyl-tRNA(Ile) + AMP + diphosphate. Catalyzes the attachment of isoleucine to tRNA(Ile). As IleRS can inadvertently accommodate and process structurally similar amino acids such as valine, to avoid such errors it has two additional distinct tRNA(Ile)-dependent editing activities. One activity is designated as 'pretransfer' editing and involves the hydrolysis of activated Val-AMP. The other activity is designated 'posttransfer' editing and involves deacylation of mischarged Val-tRNA(Ile). The protein is Isoleucine--tRNA ligase of Rickettsia bellii (strain RML369-C).